Consider the following 249-residue polypeptide: Probable transcriptional regulatory protein AB57_1731 (249 aa).

The protein belongs to the TACO1 family.

It is found in the cytoplasm. The protein is Probable transcriptional regulatory protein AB57_1731 of Acinetobacter baumannii (strain AB0057).